The sequence spans 281 residues: Diaminopimelate epimerase (281 aa).

Substrate-binding residues include asparagine 14 and asparagine 65. The active-site Proton donor is cysteine 74. Substrate contacts are provided by residues 75–76, asparagine 165, asparagine 198, and 216–217; these read GN and ER. Cysteine 225 (proton acceptor) is an active-site residue. 226-227 contributes to the substrate binding site; the sequence is GT.

Belongs to the diaminopimelate epimerase family. As to quaternary structure, homodimer.

The protein resides in the cytoplasm. The catalysed reaction is (2S,6S)-2,6-diaminopimelate = meso-2,6-diaminopimelate. Its pathway is amino-acid biosynthesis; L-lysine biosynthesis via DAP pathway; DL-2,6-diaminopimelate from LL-2,6-diaminopimelate: step 1/1. In terms of biological role, catalyzes the stereoinversion of LL-2,6-diaminopimelate (L,L-DAP) to meso-diaminopimelate (meso-DAP), a precursor of L-lysine and an essential component of the bacterial peptidoglycan. This Leptospira borgpetersenii serovar Hardjo-bovis (strain JB197) protein is Diaminopimelate epimerase.